We begin with the raw amino-acid sequence, 142 residues long: Large ribosomal subunit protein uL13 (142 aa).

This sequence belongs to the universal ribosomal protein uL13 family. In terms of assembly, part of the 50S ribosomal subunit.

This protein is one of the early assembly proteins of the 50S ribosomal subunit, although it is not seen to bind rRNA by itself. It is important during the early stages of 50S assembly. The protein is Large ribosomal subunit protein uL13 of Buchnera aphidicola subsp. Cinara cedri (strain Cc).